Consider the following 192-residue polypeptide: Peptidyl-tRNA hydrolase (192 aa).

Position 14 (Tyr14) interacts with tRNA. The active-site Proton acceptor is His19. TRNA-binding residues include Tyr64, Asn66, and Asn112.

Belongs to the PTH family. Monomer.

Its subcellular location is the cytoplasm. It carries out the reaction an N-acyl-L-alpha-aminoacyl-tRNA + H2O = an N-acyl-L-amino acid + a tRNA + H(+). Its function is as follows. Hydrolyzes ribosome-free peptidyl-tRNAs (with 1 or more amino acids incorporated), which drop off the ribosome during protein synthesis, or as a result of ribosome stalling. Catalyzes the release of premature peptidyl moieties from peptidyl-tRNA molecules trapped in stalled 50S ribosomal subunits, and thus maintains levels of free tRNAs and 50S ribosomes. The polypeptide is Peptidyl-tRNA hydrolase (Anaeromyxobacter dehalogenans (strain 2CP-C)).